The chain runs to 156 residues: Ribosomal RNA large subunit methyltransferase H (156 aa).

S-adenosyl-L-methionine is bound by residues leucine 73, glycine 104, and 123 to 128 (IGPLTL).

It belongs to the RNA methyltransferase RlmH family. In terms of assembly, homodimer.

It is found in the cytoplasm. It catalyses the reaction pseudouridine(1915) in 23S rRNA + S-adenosyl-L-methionine = N(3)-methylpseudouridine(1915) in 23S rRNA + S-adenosyl-L-homocysteine + H(+). Its function is as follows. Specifically methylates the pseudouridine at position 1915 (m3Psi1915) in 23S rRNA. This is Ribosomal RNA large subunit methyltransferase H from Xanthomonas axonopodis pv. citri (strain 306).